The sequence spans 1877 residues: Phosphatidylinositol 4-kinase stt4 (1877 aa).

The PIK helical domain maps to 1305-1491 (PDSDAASSPI…KPILDRVMDK (187 aa)). Residues 1492–1625 (MINSLSGEDK…EVWQSAIFKV (134 aa)) form a pleckstrin homology (PH) domain conferring phosphoinositide binding specificity region. One can recognise a PI3K/PI4K catalytic domain in the interval 1593–1861 (DPEELAVNGT…LIEQSYANKR (269 aa)). Residues 1599 to 1605 (VNGTEEE) are G-loop. Residues 1728-1736 (QFKDRHNGN) form a catalytic loop region. The interval 1747-1771 (HIDFGFIFDIAPGGITFESAPFKLT) is activation loop.

The protein belongs to the PI3/PI4-kinase family. Type III PI4K subfamily.

The protein resides in the cytoplasm. It carries out the reaction a 1,2-diacyl-sn-glycero-3-phospho-(1D-myo-inositol) + ATP = a 1,2-diacyl-sn-glycero-3-phospho-(1D-myo-inositol 4-phosphate) + ADP + H(+). Functionally, acts on phosphatidylinositol (PI) in the first committed step in the production of the second messenger inositol 1,4,5,-trisphosphate. This is Phosphatidylinositol 4-kinase stt4 (stt4) from Schizosaccharomyces pombe (strain 972 / ATCC 24843) (Fission yeast).